A 182-amino-acid chain; its full sequence is MIESENPNTLDEPVIQTILRDLKMIGFKLYHVILPRGNAANVLRDWDLWGPLILCLVMAIFLSISAEEQKALEFTIVFVVVWCGAAIVTVNGQLLCGNISFFQSVCILGYCIFPLTIATIIIWIIQNFTMIVKLPIVGGAWFWSSFASYGFLGSSVPESRRLLAVYPVLLFYLVIAWLVVVQ.

At 1 to 45 the chain is on the cytoplasmic side; that stretch reads MIESENPNTLDEPVIQTILRDLKMIGFKLYHVILPRGNAANVLRD. A helical membrane pass occupies residues 46-66; that stretch reads WDLWGPLILCLVMAIFLSISA. Residues 67–70 are Lumenal-facing; the sequence is EEQK. Residues 71–91 traverse the membrane as a helical segment; sequence ALEFTIVFVVVWCGAAIVTVN. Residues 92-104 are Cytoplasmic-facing; that stretch reads GQLLCGNISFFQS. A helical membrane pass occupies residues 105 to 125; the sequence is VCILGYCIFPLTIATIIIWII. The Lumenal segment spans residues 126-133; it reads QNFTMIVK. A helical transmembrane segment spans residues 134 to 154; that stretch reads LPIVGGAWFWSSFASYGFLGS. Topologically, residues 155 to 161 are cytoplasmic; that stretch reads SVPESRR. Residues 162–182 traverse the membrane as a helical segment; sequence LLAVYPVLLFYLVIAWLVVVQ.

It belongs to the YIP1 family.

It is found in the golgi apparatus membrane. This chain is Protein YIPF6 homolog (yipf6), found in Dictyostelium discoideum (Social amoeba).